The following is a 148-amino-acid chain: Protein NrdI (148 aa).

The protein belongs to the NrdI family.

Its function is as follows. Probably involved in ribonucleotide reductase function. The sequence is that of Protein NrdI from Mycolicibacterium gilvum (strain PYR-GCK) (Mycobacterium gilvum (strain PYR-GCK)).